Reading from the N-terminus, the 250-residue chain is 2,3-bisphosphoglycerate-dependent phosphoglycerate mutase (250 aa).

Substrate is bound by residues 10-17, 23-24, Arg-62, 89-92, Lys-100, 116-117, and 185-186; these read RHGESEWN, TG, ERHY, RR, and GN. The active-site Tele-phosphohistidine intermediate is the His-11. Catalysis depends on Glu-89, which acts as the Proton donor/acceptor.

It belongs to the phosphoglycerate mutase family. BPG-dependent PGAM subfamily. Homodimer.

The catalysed reaction is (2R)-2-phosphoglycerate = (2R)-3-phosphoglycerate. The protein operates within carbohydrate degradation; glycolysis; pyruvate from D-glyceraldehyde 3-phosphate: step 3/5. In terms of biological role, catalyzes the interconversion of 2-phosphoglycerate and 3-phosphoglycerate. The chain is 2,3-bisphosphoglycerate-dependent phosphoglycerate mutase from Edwardsiella ictaluri (strain 93-146).